The primary structure comprises 802 residues: Copper-exporting P-type ATPase (802 aa).

HMA domains lie at 5-70 (KKTT…YGVA) and 72-138 (ETVE…YDAS). Cu(+) is bound by residues C16, C19, C83, and C86. 6 helical membrane passes run 161-181 (LIIS…HLFN), 192-212 (WFQF…FYVG), 224-244 (MDVL…YEMV), 256-276 (LYFE…YLEA), 411-431 (YFVP…ITLV), and 438-458 (PALV…LGLA). D495 serves as the catalytic 4-aspartylphosphate intermediate. Mg(2+) contacts are provided by D690 and D694. Transmembrane regions (helical) follow at residues 748–767 (LFWA…LGLL) and 771–790 (VAGA…ALRL).

Belongs to the cation transport ATPase (P-type) (TC 3.A.3) family. Type IB subfamily.

It is found in the cell membrane. The catalysed reaction is Cu(+)(in) + ATP + H2O = Cu(+)(out) + ADP + phosphate + H(+). Involved in copper export. The polypeptide is Copper-exporting P-type ATPase (copA) (Staphylococcus aureus (strain MRSA252)).